Here is a 293-residue protein sequence, read N- to C-terminus: uncharacterized protein (293 aa).

Disordered stretches follow at residues 1–114 (MFLR…IPKL) and 268–293 (EETA…GRML). Phosphoserine is present on residues serine 34, serine 35, and serine 89. Basic and acidic residues-rich tracts occupy residues 73–95 (SSRD…RDKT) and 277–293 (GQER…GRML).

This is an uncharacterized protein from Mus musculus (Mouse).